The sequence spans 937 residues: Valine--tRNA ligase (937 aa).

Positions 44-54 (PNVTGTLHMGH) match the 'HIGH' region motif. Positions 548–552 (KMSKS) match the 'KMSKS' region motif. An ATP-binding site is contributed by K551. Residues 874–937 (AAETARLTKE…KLKAQLLKLA (64 aa)) adopt a coiled-coil conformation.

It belongs to the class-I aminoacyl-tRNA synthetase family. ValS type 1 subfamily. As to quaternary structure, monomer.

The protein localises to the cytoplasm. It catalyses the reaction tRNA(Val) + L-valine + ATP = L-valyl-tRNA(Val) + AMP + diphosphate. Catalyzes the attachment of valine to tRNA(Val). As ValRS can inadvertently accommodate and process structurally similar amino acids such as threonine, to avoid such errors, it has a 'posttransfer' editing activity that hydrolyzes mischarged Thr-tRNA(Val) in a tRNA-dependent manner. The polypeptide is Valine--tRNA ligase (Laribacter hongkongensis (strain HLHK9)).